Reading from the N-terminus, the 292-residue chain is 4-hydroxy-tetrahydrodipicolinate synthase (292 aa).

Threonine 45 provides a ligand contact to pyruvate. The Proton donor/acceptor role is filled by tyrosine 134. The active-site Schiff-base intermediate with substrate is the lysine 162. Valine 204 lines the pyruvate pocket.

The protein belongs to the DapA family. In terms of assembly, homotetramer; dimer of dimers.

The protein resides in the cytoplasm. It catalyses the reaction L-aspartate 4-semialdehyde + pyruvate = (2S,4S)-4-hydroxy-2,3,4,5-tetrahydrodipicolinate + H2O + H(+). Its pathway is amino-acid biosynthesis; L-lysine biosynthesis via DAP pathway; (S)-tetrahydrodipicolinate from L-aspartate: step 3/4. In terms of biological role, catalyzes the condensation of (S)-aspartate-beta-semialdehyde [(S)-ASA] and pyruvate to 4-hydroxy-tetrahydrodipicolinate (HTPA). The protein is 4-hydroxy-tetrahydrodipicolinate synthase of Marinobacter nauticus (strain ATCC 700491 / DSM 11845 / VT8) (Marinobacter aquaeolei).